We begin with the raw amino-acid sequence, 78 residues long: NAD(P)H-quinone oxidoreductase subunit O (78 aa).

Belongs to the complex I NdhO subunit family. NDH-1 can be composed of about 15 different subunits; different subcomplexes with different compositions have been identified which probably have different functions.

Its subcellular location is the cell inner membrane. It carries out the reaction a plastoquinone + NADH + (n+1) H(+)(in) = a plastoquinol + NAD(+) + n H(+)(out). It catalyses the reaction a plastoquinone + NADPH + (n+1) H(+)(in) = a plastoquinol + NADP(+) + n H(+)(out). In terms of biological role, NDH-1 shuttles electrons from an unknown electron donor, via FMN and iron-sulfur (Fe-S) centers, to quinones in the respiratory and/or the photosynthetic chain. The immediate electron acceptor for the enzyme in this species is believed to be plastoquinone. Couples the redox reaction to proton translocation, and thus conserves the redox energy in a proton gradient. Cyanobacterial NDH-1 also plays a role in inorganic carbon-concentration. This Gloeobacter violaceus (strain ATCC 29082 / PCC 7421) protein is NAD(P)H-quinone oxidoreductase subunit O.